Here is a 959-residue protein sequence, read N- to C-terminus: Glutamate receptor 3.4 (959 aa).

A signal peptide spans 1-35 (MGFLVMIREVSMAKAIRVVLLCVSVLWVVPKECAC). Topologically, residues 36–613 (RSNFSRNSSS…SPWSFLKPFT (578 aa)) are extracellular. 9 N-linked (GlcNAc...) asparagine glycosylation sites follow: Asn-38, Asn-42, Asn-108, Asn-365, Asn-378, Asn-404, Asn-443, Asn-461, and Asn-576. A helical transmembrane segment spans residues 614–634 (IEMWAVTGGFFLFVGAMVWIL). The Cytoplasmic segment spans residues 635–643 (EHRFNQEFR). The chain crosses the membrane as a helical span at residues 644–664 (GPPRRQLITIFWFSFSTMFFS). Residues 665–675 (HRENTVSSLGR) lie on the Cytoplasmic side of the membrane. A helical transmembrane segment spans residues 676–696 (FVLIIWLFVVLIINSSYTASL). Residues 697–857 (TSILTIRQLT…SEDSQLSLKS (161 aa)) lie on the Extracellular side of the membrane. Residues 858–878 (FWGLFLICGITCFMALTVFFW) traverse the membrane as a helical segment. The Cytoplasmic segment spans residues 879-959 (RVFWQYQRLL…TSQSQHGEIT (81 aa)). Disordered stretches follow at residues 893–913 (DEER…SRAP) and 936–959 (KSSK…GEIT). Residues 943 to 959 (STQSAAGTSQSQHGEIT) are compositionally biased toward low complexity.

This sequence belongs to the glutamate-gated ion channel (TC 1.A.10.1) family. Forms a heteromeric channel with GLR3.2. Highly expressed in roots and at lower levels in leaves and siliques. Expressed in seedlings, cotyledons, roots (e.g. root hairs, epidermis and cortex cells), stems, leaves (e.g. vascular bundles and hydathodes), and siliques. Expressed in root phloem.

It is found in the cell membrane. It localises to the plastid. Its subcellular location is the chloroplast membrane. In terms of biological role, glutamate-gated receptor that probably acts as a non-selective cation channel, at least in hypocotyls. Can be triggered by Asn, Ser, Gly and, to a lower extent, Ala, Cys and Glu. May be involved in light-signal transduction and calcium homeostasis via the regulation of calcium influx into cells. Plays an important role in the calcium-based fast transmission of environmental stress. Acts as a negative regulator of lateral root initiation and development. May restrict primordia numbers and position along the root axis by a signaling process originating in the phloem. AtGLR3.4-mediated cytosolic calcium influx may be involved in the regulation of seed germination under salt stress by modulating sodium accumulation through the SOS pathway. The polypeptide is Glutamate receptor 3.4 (Arabidopsis thaliana (Mouse-ear cress)).